The primary structure comprises 176 residues: NAD(P)H-quinone oxidoreductase subunit 6, chloroplastic (176 aa).

The next 5 helical transmembrane spans lie at 10 to 30 (ILLV…VLLT), 32 to 52 (PIYS…FHIP), 61 to 81 (AQLL…VMFM), 107 to 127 (ILFS…IWTT), and 152 to 172 (FYLP…GAIA).

It belongs to the complex I subunit 6 family. NDH is composed of at least 16 different subunits, 5 of which are encoded in the nucleus.

It is found in the plastid. It localises to the chloroplast thylakoid membrane. It carries out the reaction a plastoquinone + NADH + (n+1) H(+)(in) = a plastoquinol + NAD(+) + n H(+)(out). The enzyme catalyses a plastoquinone + NADPH + (n+1) H(+)(in) = a plastoquinol + NADP(+) + n H(+)(out). NDH shuttles electrons from NAD(P)H:plastoquinone, via FMN and iron-sulfur (Fe-S) centers, to quinones in the photosynthetic chain and possibly in a chloroplast respiratory chain. The immediate electron acceptor for the enzyme in this species is believed to be plastoquinone. Couples the redox reaction to proton translocation, and thus conserves the redox energy in a proton gradient. The sequence is that of NAD(P)H-quinone oxidoreductase subunit 6, chloroplastic (ndhG) from Calycanthus floridus var. glaucus (Eastern sweetshrub).